A 129-amino-acid chain; its full sequence is Calcitonin gene-related peptide 2 (129 aa).

Residues methionine 1–alanine 25 form the signal peptide. Positions glutamine 26–glutamine 81 are excised as a propeptide. Cysteine 85 and cysteine 90 are disulfide-bonded. Phenylalanine 120 bears the Phenylalanine amide mark. The propeptide occupies aspartate 126–alanine 129.

Belongs to the calcitonin family.

It localises to the secreted. CALCB/CGRP2 is a peptide hormone that induces vasodilation mediated by the CALCRL-RAMP1 receptor complex. Dilates a variety of vessels including the coronary, cerebral and systemic vasculature. Its abundance in the CNS also points toward a neurotransmitter or neuromodulator role. The polypeptide is Calcitonin gene-related peptide 2 (CALCB) (Equus caballus (Horse)).